A 285-amino-acid chain; its full sequence is Energy-coupling factor transporter ATP-binding protein EcfA2 (285 aa).

The ABC transporter domain maps to 3 to 245 (IKFKKVDYIY…RKWLKKHNLS (243 aa)). 40–47 (GHTGSGKS) lines the ATP pocket.

It belongs to the ABC transporter superfamily. Energy-coupling factor EcfA family. As to quaternary structure, forms a stable energy-coupling factor (ECF) transporter complex composed of 2 membrane-embedded substrate-binding proteins (S component), 2 ATP-binding proteins (A component) and 2 transmembrane proteins (T component).

It localises to the cell membrane. Its function is as follows. ATP-binding (A) component of a common energy-coupling factor (ECF) ABC-transporter complex. Unlike classic ABC transporters this ECF transporter provides the energy necessary to transport a number of different substrates. This is Energy-coupling factor transporter ATP-binding protein EcfA2 from Lactobacillus acidophilus (strain ATCC 700396 / NCK56 / N2 / NCFM).